The sequence spans 214 residues: tRNA (guanine-N(7)-)-methyltransferase (214 aa).

Positions 44, 69, 96, and 118 each coordinate S-adenosyl-L-methionine. Residue D118 is part of the active site. Substrate is bound by residues K122, D154, and 191–194 (TEYE).

The protein belongs to the class I-like SAM-binding methyltransferase superfamily. TrmB family.

It carries out the reaction guanosine(46) in tRNA + S-adenosyl-L-methionine = N(7)-methylguanosine(46) in tRNA + S-adenosyl-L-homocysteine. It functions in the pathway tRNA modification; N(7)-methylguanine-tRNA biosynthesis. In terms of biological role, catalyzes the formation of N(7)-methylguanine at position 46 (m7G46) in tRNA. The protein is tRNA (guanine-N(7)-)-methyltransferase of Listeria monocytogenes serovar 1/2a (strain ATCC BAA-679 / EGD-e).